Reading from the N-terminus, the 320-residue chain is uncharacterized protein (320 aa).

Residue R61 is modified to Omega-N-methylarginine. The tract at residues 299-320 (LHLQHQKQTSKDAGRQTPERKA) is disordered. Residues 307 to 320 (TSKDAGRQTPERKA) are compositionally biased toward basic and acidic residues. T315 is subject to Phosphothreonine.

This is an uncharacterized protein from Mus musculus (Mouse).